Here is a 220-residue protein sequence, read N- to C-terminus: Probable pterin-4-alpha-carbinolamine dehydratase, chloroplastic (220 aa).

A chloroplast-targeting transit peptide spans 1 to 50 (MAATSSSPPCNISASSLLLRQPSRSILKVFGLLPPVSRNNRKLGRLTVTR).

The protein belongs to the pterin-4-alpha-carbinolamine dehydratase family. Interacts with SDIR1. Interacts with AIRP2. In terms of processing, ubiquitinated by SDIR1. Ubiquitination leads to its subsequent degradation, thus controlling abscisic acid (ABA) signaling. Ubiquitinated by AIRP2. Ubiquitination leads to its subsequent degradation, thus controlling abscisic acid (ABA) signaling during drought stress.

The protein resides in the plastid. It is found in the chloroplast. The protein localises to the cell membrane. Its subcellular location is the nucleus. It catalyses the reaction (4aS,6R)-4a-hydroxy-L-erythro-5,6,7,8-tetrahydrobiopterin = (6R)-L-erythro-6,7-dihydrobiopterin + H2O. Involved in tetrahydrobiopterin biosynthesis. Interacts with and acts downstream of the E3 ubiquitin-protein ligase SDIR1 in abscisic acid (ABA) and salt stress signaling. Regulates the expression of the bZIP transcription factor ABI5, which mediates responses to ABA during seed germination and salt stress. The SDIR1-ATP1/SDIRIP1 complex plays an important role in ABA signaling through the ubiquitination pathway. Acts downstream of AIRP2 in regulation of ABA signaling during drought stress. The protein is Probable pterin-4-alpha-carbinolamine dehydratase, chloroplastic of Arabidopsis thaliana (Mouse-ear cress).